The sequence spans 246 residues: tRNA pseudouridine synthase A (246 aa).

Asp-52 acts as the Nucleophile in catalysis. Residue Tyr-111 coordinates substrate.

The protein belongs to the tRNA pseudouridine synthase TruA family. As to quaternary structure, homodimer.

It carries out the reaction uridine(38/39/40) in tRNA = pseudouridine(38/39/40) in tRNA. In terms of biological role, formation of pseudouridine at positions 38, 39 and 40 in the anticodon stem and loop of transfer RNAs. In Ehrlichia ruminantium (strain Welgevonden), this protein is tRNA pseudouridine synthase A.